The primary structure comprises 448 residues: Probable glycine dehydrogenase (decarboxylating) subunit 1 (448 aa).

Belongs to the GcvP family. N-terminal subunit subfamily. The glycine cleavage system is composed of four proteins: P, T, L and H. In this organism, the P 'protein' is a heterodimer of two subunits.

The catalysed reaction is N(6)-[(R)-lipoyl]-L-lysyl-[glycine-cleavage complex H protein] + glycine + H(+) = N(6)-[(R)-S(8)-aminomethyldihydrolipoyl]-L-lysyl-[glycine-cleavage complex H protein] + CO2. Its function is as follows. The glycine cleavage system catalyzes the degradation of glycine. The P protein binds the alpha-amino group of glycine through its pyridoxal phosphate cofactor; CO(2) is released and the remaining methylamine moiety is then transferred to the lipoamide cofactor of the H protein. The sequence is that of Probable glycine dehydrogenase (decarboxylating) subunit 1 from Geobacillus sp. (strain WCH70).